The following is a 187-amino-acid chain: Elongation factor P (187 aa).

Belongs to the elongation factor P family.

The protein resides in the cytoplasm. Its pathway is protein biosynthesis; polypeptide chain elongation. Functionally, involved in peptide bond synthesis. Stimulates efficient translation and peptide-bond synthesis on native or reconstituted 70S ribosomes in vitro. Probably functions indirectly by altering the affinity of the ribosome for aminoacyl-tRNA, thus increasing their reactivity as acceptors for peptidyl transferase. The chain is Elongation factor P from Mycobacterium leprae (strain Br4923).